We begin with the raw amino-acid sequence, 289 residues long: 4-hydroxybenzoate octaprenyltransferase (289 aa).

The next 9 helical transmembrane spans lie at 22–42 (AGWL…SHGF), 45–65 (WHLV…GCCI), 96–116 (LGLG…TNAV), 118–138 (IAWS…KRYV), 140–160 (MPQA…FAAV), 164–184 (VPPL…AYDT), 211–231 (VAGV…ALIQ), 236–256 (AIFM…GWLI), and 267–287 (AFRL…LSYW).

It belongs to the UbiA prenyltransferase family. Mg(2+) serves as cofactor.

It is found in the cell inner membrane. The catalysed reaction is all-trans-octaprenyl diphosphate + 4-hydroxybenzoate = 4-hydroxy-3-(all-trans-octaprenyl)benzoate + diphosphate. Its pathway is cofactor biosynthesis; ubiquinone biosynthesis. Catalyzes the prenylation of para-hydroxybenzoate (PHB) with an all-trans polyprenyl group. Mediates the second step in the final reaction sequence of ubiquinone-8 (UQ-8) biosynthesis, which is the condensation of the polyisoprenoid side chain with PHB, generating the first membrane-bound Q intermediate 3-octaprenyl-4-hydroxybenzoate. The polypeptide is 4-hydroxybenzoate octaprenyltransferase (Polaromonas naphthalenivorans (strain CJ2)).